The chain runs to 318 residues: ATP synthase gamma chain (318 aa).

It belongs to the ATPase gamma chain family. F-type ATPases have 2 components, CF(1) - the catalytic core - and CF(0) - the membrane proton channel. CF(1) has five subunits: alpha(3), beta(3), gamma(1), delta(1), epsilon(1). CF(0) has three main subunits: a, b and c.

The protein localises to the cell membrane. Produces ATP from ADP in the presence of a proton gradient across the membrane. The gamma chain is believed to be important in regulating ATPase activity and the flow of protons through the CF(0) complex. The polypeptide is ATP synthase gamma chain (Lactobacillus gasseri (strain ATCC 33323 / DSM 20243 / BCRC 14619 / CIP 102991 / JCM 1131 / KCTC 3163 / NCIMB 11718 / NCTC 13722 / AM63)).